A 290-amino-acid polypeptide reads, in one-letter code: 33 kDa chaperonin (290 aa).

Intrachain disulfides connect cysteine 235-cysteine 237 and cysteine 268-cysteine 271.

This sequence belongs to the HSP33 family. Under oxidizing conditions two disulfide bonds are formed involving the reactive cysteines. Under reducing conditions zinc is bound to the reactive cysteines and the protein is inactive.

It localises to the cytoplasm. Its function is as follows. Redox regulated molecular chaperone. Protects both thermally unfolding and oxidatively damaged proteins from irreversible aggregation. Plays an important role in the bacterial defense system toward oxidative stress. In Streptococcus pyogenes serotype M5 (strain Manfredo), this protein is 33 kDa chaperonin.